Here is a 268-residue protein sequence, read N- to C-terminus: AB hydrolase superfamily protein YisY (268 aa).

Positions 23–254 constitute an AB hydrolase-1 domain; that stretch reads PIIFLHGWPL…NSGHGAFYEE (232 aa). Residues Ser96, Asp220, and His248 contribute to the active site.

The protein belongs to the AB hydrolase superfamily.

The chain is AB hydrolase superfamily protein YisY (yisY) from Bacillus subtilis (strain 168).